The primary structure comprises 335 residues: Probable cytosolic iron-sulfur protein assembly protein Ciao1 (335 aa).

WD repeat units follow at residues 12–51 (GHKGRIWGVAWHPKGNVFASCGEDKAIRVWSLSGNTWSTK), 57–96 (GHKRTIREIRWSPCGQYLASASFDATTAIWSKSSGEFECN), 101–140 (GHENEVKSVSWSRSGGLLATCSRDKSVWIWEVAGDDEFEC), 146–185 (AHTQDVKRVVWHPTKDILASASYDNTIKMFAESQLDSDWD), 192–231 (SHTSTVWSIDFDAEGDRLVSCSDDKTLKIWRAYHPGNDAG), 250–289 (QHSRAIYDVSWCKLTGLIATGCGDDGIRIFKETSDSKRDE), and 301–335 (AHEQDVNAVEWNPAVAGQLISCSDDGTIKIWKVDD).

The protein belongs to the WD repeat CIA1 family.

In terms of biological role, essential component of the cytosolic iron-sulfur (Fe/S) protein assembly machinery. Required for the maturation of extramitochondrial Fe/S proteins. This chain is Probable cytosolic iron-sulfur protein assembly protein Ciao1, found in Drosophila pseudoobscura pseudoobscura (Fruit fly).